A 399-amino-acid chain; its full sequence is Dual-specificity RNA methyltransferase RlmN (399 aa).

Residue glutamate 121 is the Proton acceptor of the active site. Positions 127 to 376 (DVDRGTLCVS…VRTPRGRDIL (250 aa)) constitute a Radical SAM core domain. Cysteine 134 and cysteine 379 are joined by a disulfide. Residues cysteine 141, cysteine 145, and cysteine 148 each coordinate [4Fe-4S] cluster. Residues 205–206 (GE), serine 237, 259–261 (SLH), and asparagine 336 contribute to the S-adenosyl-L-methionine site. Residue cysteine 379 is the S-methylcysteine intermediate of the active site.

Belongs to the radical SAM superfamily. RlmN family. Requires [4Fe-4S] cluster as cofactor.

The protein resides in the cytoplasm. The enzyme catalyses adenosine(2503) in 23S rRNA + 2 reduced [2Fe-2S]-[ferredoxin] + 2 S-adenosyl-L-methionine = 2-methyladenosine(2503) in 23S rRNA + 5'-deoxyadenosine + L-methionine + 2 oxidized [2Fe-2S]-[ferredoxin] + S-adenosyl-L-homocysteine. It carries out the reaction adenosine(37) in tRNA + 2 reduced [2Fe-2S]-[ferredoxin] + 2 S-adenosyl-L-methionine = 2-methyladenosine(37) in tRNA + 5'-deoxyadenosine + L-methionine + 2 oxidized [2Fe-2S]-[ferredoxin] + S-adenosyl-L-homocysteine. Functionally, specifically methylates position 2 of adenine 2503 in 23S rRNA and position 2 of adenine 37 in tRNAs. m2A2503 modification seems to play a crucial role in the proofreading step occurring at the peptidyl transferase center and thus would serve to optimize ribosomal fidelity. The protein is Dual-specificity RNA methyltransferase RlmN of Methylocella silvestris (strain DSM 15510 / CIP 108128 / LMG 27833 / NCIMB 13906 / BL2).